The sequence spans 177 residues: Thymidine kinase (177 aa).

11–18 (GPMFSGKS) contacts ATP. Glutamate 83 serves as the catalytic Proton acceptor. Phenylalanine 113 provides a ligand contact to substrate. Cysteine 138 and cysteine 141 together coordinate Zn(2+). 157-161 (IEIIG) lines the substrate pocket. Zn(2+)-binding residues include cysteine 170 and cysteine 173.

The protein belongs to the thymidine kinase family. In terms of assembly, homotetramer. Two molecules of substrate bind to each enzyme tetramer.

It carries out the reaction thymidine + ATP = dTMP + ADP + H(+). In terms of biological role, phosphorylates thymidine and thymidine analogs, such as azidothymidine (AZT). Part of the salvage pathway for pyrimidine deoxyribonucleotide synthesis. This Variola virus (isolate Human/India/Ind3/1967) (VARV) protein is Thymidine kinase (OPG101).